We begin with the raw amino-acid sequence, 904 residues long: UPF0182 protein CKL_0015 (904 aa).

Helical transmembrane passes span 9–29 (SLIV…DFII), 47–67 (LIAI…SIVL), 96–116 (IFII…AATY), 157–177 (ILSL…TLSV), 208–228 (LAVL…LKCI), 253–273 (YKII…SILV), and 279–299 (IIVS…SYTV).

It belongs to the UPF0182 family.

Its subcellular location is the cell membrane. The polypeptide is UPF0182 protein CKL_0015 (Clostridium kluyveri (strain ATCC 8527 / DSM 555 / NBRC 12016 / NCIMB 10680 / K1)).